Consider the following 454-residue polypeptide: Probable tRNA methyltransferase 9B (454 aa).

Position 214 is a phosphoserine (Ser-214).

Belongs to the methyltransferase superfamily. As to expression, down-regulated in breast, bladder, colorectal, cervix and testicular carcinomas.

May modify wobble uridines in specific arginine and glutamic acid tRNAs. Acts as a tumor suppressor by promoting the expression of LIN9. This Homo sapiens (Human) protein is Probable tRNA methyltransferase 9B.